The following is a 463-amino-acid chain: Cysteine--tRNA ligase (463 aa).

Cys-29 serves as a coordination point for Zn(2+). Positions 31–41 (PTVYDFAHIGN) match the 'HIGH' region motif. Residues Cys-227, His-252, and Glu-256 each contribute to the Zn(2+) site. The 'KMSKS' region signature appears at 285–289 (KMSKS). Lys-288 is a binding site for ATP.

It belongs to the class-I aminoacyl-tRNA synthetase family. As to quaternary structure, monomer. Zn(2+) is required as a cofactor.

It is found in the cytoplasm. It catalyses the reaction tRNA(Cys) + L-cysteine + ATP = L-cysteinyl-tRNA(Cys) + AMP + diphosphate. The chain is Cysteine--tRNA ligase from Rhodopseudomonas palustris (strain ATCC BAA-98 / CGA009).